A 451-amino-acid polypeptide reads, in one-letter code: Gamma-aminobutyric acid receptor subunit alpha-2 (451 aa).

The first 28 residues, 1–28 (MKTKLSTCNVWSLLLVLLVWDPVRLVLA), serve as a signal peptide directing secretion. Residues 29-249 (NIQEDEAKNN…MTAHFHLKRK (221 aa)) are Extracellular-facing. An N-linked (GlcNAc...) asparagine glycan is attached at asparagine 38. Residue arginine 94 coordinates 4-aminobutanoate. The N-linked (GlcNAc...) asparagine glycan is linked to asparagine 138. Threonine 157 contacts 4-aminobutanoate. Cysteine 166 and cysteine 180 form a disulfide bridge. Residues 250–270 (IGYFVIQTYLPCIMTVILSQV) traverse the membrane as a helical segment. The Cytoplasmic segment spans residues 271–280 (SFWLNRESVP). The chain crosses the membrane as a helical span at residues 281–300 (ARTVFGVTTVLTMTTLSISA). Topologically, residues 301 to 311 (RNSLPKVAYAT) are extracellular. The chain crosses the membrane as a helical span at residues 312–332 (AMDWFIAVCYAFVFSALIEFA). Topologically, residues 333–420 (TVNYFTKRGW…FNSVSKIDRM (88 aa)) are cytoplasmic. Positions 389-408 (KSATTPEPNKKPENKPAEAK) are disordered. The span at 396–408 (PNKKPENKPAEAK) shows a compositional bias: basic and acidic residues. Residues 421-441 (SRIVFPVLFGTFNLVYWATYL) traverse the membrane as a helical segment. At 442 to 451 (NREPVLGVSP) the chain is on the extracellular side.

Belongs to the ligand-gated ion channel (TC 1.A.9) family. Gamma-aminobutyric acid receptor (TC 1.A.9.5) subfamily. GABRA2 sub-subfamily. As to quaternary structure, heteropentamer, formed by a combination of alpha (GABRA1-6), beta (GABRB1-3), gamma (GABRG1-3), delta (GABRD), epsilon (GABRE), rho (GABRR1-3), pi (GABRP) and theta (GABRQ) subunits, each subunit exhibiting distinct physiological and pharmacological properties. Interacts with UBQLN1. Interacts with KIF21B. Interacts with LHFPL4. Interacts with SHISA7; interaction leads to the regulation of GABA(A) receptor trafficking, channel deactivation kinetics and pharmacology. Post-translationally, glycosylated.

The protein localises to the postsynaptic cell membrane. It is found in the cell membrane. It localises to the cytoplasmic vesicle membrane. Its subcellular location is the cell projection. The protein resides in the dendrite. It catalyses the reaction chloride(in) = chloride(out). With respect to regulation, activated by pentobarbital. Inhibited by the antagonist bicuculline. Functionally, alpha subunit of the heteropentameric ligand-gated chloride channel gated by gamma-aminobutyric acid (GABA), a major inhibitory neurotransmitter in the brain. GABA-gated chloride channels, also named GABA(A) receptors (GABAAR), consist of five subunits arranged around a central pore and contain GABA active binding site(s) located at the alpha and beta subunit interface(s). When activated by GABA, GABAARs selectively allow the flow of chloride anions across the cell membrane down their electrochemical gradient. Chloride influx into the postsynaptic neuron following GABAAR opening decreases the neuron ability to generate a new action potential, thereby reducing nerve transmission. The alpha-2 subunit exhibits synaptogenic activity together with beta-2 and very little to no activity together with beta-3, the gamma-2 subunit being necessary but not sufficient to induce rapid synaptic contacts formation. This Mus musculus (Mouse) protein is Gamma-aminobutyric acid receptor subunit alpha-2.